The following is a 355-amino-acid chain: Epoxide hydrolase 2 (355 aa).

The AB hydrolase-1 domain maps to 78–323 (VLLMVHGFPE…IRGASHWVQQ (246 aa)). Aspartate 152 (nucleophile) is an active-site residue. Catalysis depends on tyrosine 263, which acts as the Proton donor. Histidine 319 functions as the Proton acceptor in the catalytic mechanism.

The protein belongs to the AB hydrolase superfamily. Epoxide hydrolase family.

It carries out the reaction an epoxide + H2O = an ethanediol. Its pathway is lipid metabolism. Catalyzes the hydrolysis of epoxide-containing fatty acids. Active in vitro against trans-1,3-diphenylpropene oxide (t-DPPO), epoxyeicosatrienoic acids (EETs) including 8,9-EET, 11,12-EET and 14,15-EET and the linoleic acid metabolites 12,13-epoxy-9-octadecenoate (12,13-EpOME) and 9,10-epoxy-12-octadecenoate (9,10-EpOME). The chain is Epoxide hydrolase 2 from Caenorhabditis elegans.